The chain runs to 453 residues: Bifunctional protein GlmU (453 aa).

Positions 1–226 (MFAIAILAAG…IDEVSGVNDR (226 aa)) are pyrophosphorylase. UDP-N-acetyl-alpha-D-glucosamine contacts are provided by residues 7–10 (LAAG), lysine 21, glutamine 73, and 78–79 (GT). Aspartate 103 contributes to the Mg(2+) binding site. UDP-N-acetyl-alpha-D-glucosamine-binding residues include glycine 140, glutamate 155, asparagine 170, and asparagine 224. Asparagine 224 is a binding site for Mg(2+). The interval 227–247 (AQLANCENLIQQSLRNHWMSK) is linker. The segment at 248–453 (GVSFIDPESC…NWKTREETNQ (206 aa)) is N-acetyltransferase. Residues arginine 329 and lysine 347 each contribute to the UDP-N-acetyl-alpha-D-glucosamine site. Histidine 359 acts as the Proton acceptor in catalysis. The UDP-N-acetyl-alpha-D-glucosamine site is built by tyrosine 362 and asparagine 373. Positions 376, 419, and 436 each coordinate acetyl-CoA.

It in the N-terminal section; belongs to the N-acetylglucosamine-1-phosphate uridyltransferase family. In the C-terminal section; belongs to the transferase hexapeptide repeat family. In terms of assembly, homotrimer. Requires Mg(2+) as cofactor.

Its subcellular location is the cytoplasm. It catalyses the reaction alpha-D-glucosamine 1-phosphate + acetyl-CoA = N-acetyl-alpha-D-glucosamine 1-phosphate + CoA + H(+). The catalysed reaction is N-acetyl-alpha-D-glucosamine 1-phosphate + UTP + H(+) = UDP-N-acetyl-alpha-D-glucosamine + diphosphate. The protein operates within nucleotide-sugar biosynthesis; UDP-N-acetyl-alpha-D-glucosamine biosynthesis; N-acetyl-alpha-D-glucosamine 1-phosphate from alpha-D-glucosamine 6-phosphate (route II): step 2/2. Its pathway is nucleotide-sugar biosynthesis; UDP-N-acetyl-alpha-D-glucosamine biosynthesis; UDP-N-acetyl-alpha-D-glucosamine from N-acetyl-alpha-D-glucosamine 1-phosphate: step 1/1. It participates in bacterial outer membrane biogenesis; LPS lipid A biosynthesis. Functionally, catalyzes the last two sequential reactions in the de novo biosynthetic pathway for UDP-N-acetylglucosamine (UDP-GlcNAc). The C-terminal domain catalyzes the transfer of acetyl group from acetyl coenzyme A to glucosamine-1-phosphate (GlcN-1-P) to produce N-acetylglucosamine-1-phosphate (GlcNAc-1-P), which is converted into UDP-GlcNAc by the transfer of uridine 5-monophosphate (from uridine 5-triphosphate), a reaction catalyzed by the N-terminal domain. In Prochlorococcus marinus (strain MIT 9211), this protein is Bifunctional protein GlmU.